We begin with the raw amino-acid sequence, 592 residues long: A-type ATP synthase subunit A (592 aa).

233–240 is a binding site for ATP; it reads GPFGSGKT.

It belongs to the ATPase alpha/beta chains family. In terms of assembly, has multiple subunits with at least A(3), B(3), C, D, E, F, H, I and proteolipid K(x).

Its subcellular location is the cell membrane. The enzyme catalyses ATP + H2O + 4 H(+)(in) = ADP + phosphate + 5 H(+)(out). Its function is as follows. Component of the A-type ATP synthase that produces ATP from ADP in the presence of a proton gradient across the membrane. The A chain is the catalytic subunit. The polypeptide is A-type ATP synthase subunit A (Saccharolobus solfataricus (strain ATCC 35092 / DSM 1617 / JCM 11322 / P2) (Sulfolobus solfataricus)).